Here is a 202-residue protein sequence, read N- to C-terminus: dITP/XTP pyrophosphatase (202 aa).

Residue 10–15 (TSNRHK) coordinates substrate. D70 functions as the Proton acceptor in the catalytic mechanism. D70 is a Mg(2+) binding site. Residues S71, 153 to 156 (FGYD), K176, and 181 to 182 (HR) each bind substrate.

It belongs to the HAM1 NTPase family. As to quaternary structure, homodimer. Mg(2+) serves as cofactor.

The catalysed reaction is XTP + H2O = XMP + diphosphate + H(+). It catalyses the reaction dITP + H2O = dIMP + diphosphate + H(+). The enzyme catalyses ITP + H2O = IMP + diphosphate + H(+). Functionally, pyrophosphatase that catalyzes the hydrolysis of nucleoside triphosphates to their monophosphate derivatives, with a high preference for the non-canonical purine nucleotides XTP (xanthosine triphosphate), dITP (deoxyinosine triphosphate) and ITP. Seems to function as a house-cleaning enzyme that removes non-canonical purine nucleotides from the nucleotide pool, thus preventing their incorporation into DNA/RNA and avoiding chromosomal lesions. The polypeptide is dITP/XTP pyrophosphatase (Methylacidiphilum infernorum (isolate V4) (Methylokorus infernorum (strain V4))).